The primary structure comprises 551 residues: GMP synthase [glutamine-hydrolyzing] (551 aa).

Positions 40 to 233 (KILIVDFGSQ…VRKIAGLTGD (194 aa)) constitute a Glutamine amidotransferase type-1 domain. Catalysis depends on Cys117, which acts as the Nucleophile. Residues His207 and Glu209 contribute to the active site. Residues 234-426 (WTMRAFREEE…LGLPEIFVGR (193 aa)) form the GMPS ATP-PPase domain. 261–267 (SGGVDSA) is a binding site for ATP.

In terms of assembly, homodimer.

It catalyses the reaction XMP + L-glutamine + ATP + H2O = GMP + L-glutamate + AMP + diphosphate + 2 H(+). It functions in the pathway purine metabolism; GMP biosynthesis; GMP from XMP (L-Gln route): step 1/1. Catalyzes the synthesis of GMP from XMP. This chain is GMP synthase [glutamine-hydrolyzing], found in Bradyrhizobium diazoefficiens (strain JCM 10833 / BCRC 13528 / IAM 13628 / NBRC 14792 / USDA 110).